The following is a 191-amino-acid chain: Somatotropin (191 aa).

His20 contributes to the Zn(2+) binding site. A disulfide bridge connects residues Cys53 and Cys164. A Zn(2+)-binding site is contributed by Glu173. A disulfide bridge links Cys181 with Cys189.

This sequence belongs to the somatotropin/prolactin family.

Its subcellular location is the secreted. In terms of biological role, growth hormone plays an important role in growth control and is involved in the regulation of several anabolic processes. Implicated as an osmoregulatory substance important for seawater adaptation. The chain is Somatotropin (GH) from Chelonia mydas (Green sea-turtle).